A 75-amino-acid polypeptide reads, in one-letter code: UPF0270 protein Avin_35000 (75 aa).

Belongs to the UPF0270 family.

The sequence is that of UPF0270 protein Avin_35000 from Azotobacter vinelandii (strain DJ / ATCC BAA-1303).